The following is a 353-amino-acid chain: Photosystem II D2 protein (353 aa).

Threonine 2 is modified (N-acetylthreonine). At threonine 2 the chain carries Phosphothreonine. Residues 41–61 (CAYFALGGWFTGTTFVTSWYT) form a helical membrane-spanning segment. Histidine 118 lines the chlorophyll a pocket. Residues 125–141 (GFMLRQFELARSVQLRP) traverse the membrane as a helical segment. Residues glutamine 130 and asparagine 143 each contribute to the pheophytin a site. Residues 153 to 166 (VFVSVFLIYPLGQS) traverse the membrane as a helical segment. Histidine 198 lines the chlorophyll a pocket. Residues 208 to 228 (AALLCAIHGATVENTLFEDGD) form a helical membrane-spanning segment. A plastoquinone is bound by residues histidine 215 and phenylalanine 262. Histidine 215 contributes to the Fe cation binding site. A Fe cation-binding site is contributed by histidine 269. The chain crosses the membrane as a helical span at residues 279–295 (GLWMSALGVVGLALNLR).

Belongs to the reaction center PufL/M/PsbA/D family. PSII is composed of 1 copy each of membrane proteins PsbA, PsbB, PsbC, PsbD, PsbE, PsbF, PsbH, PsbI, PsbJ, PsbK, PsbL, PsbM, PsbT, PsbX, PsbY, PsbZ, Psb30/Ycf12, at least 3 peripheral proteins of the oxygen-evolving complex and a large number of cofactors. It forms dimeric complexes. The cofactor is The D1/D2 heterodimer binds P680, chlorophylls that are the primary electron donor of PSII, and subsequent electron acceptors. It shares a non-heme iron and each subunit binds pheophytin, quinone, additional chlorophylls, carotenoids and lipids. There is also a Cl(-1) ion associated with D1 and D2, which is required for oxygen evolution. The PSII complex binds additional chlorophylls, carotenoids and specific lipids..

It is found in the plastid. The protein localises to the chloroplast thylakoid membrane. It carries out the reaction 2 a plastoquinone + 4 hnu + 2 H2O = 2 a plastoquinol + O2. Its function is as follows. Photosystem II (PSII) is a light-driven water:plastoquinone oxidoreductase that uses light energy to abstract electrons from H(2)O, generating O(2) and a proton gradient subsequently used for ATP formation. It consists of a core antenna complex that captures photons, and an electron transfer chain that converts photonic excitation into a charge separation. The D1/D2 (PsbA/PsbD) reaction center heterodimer binds P680, the primary electron donor of PSII as well as several subsequent electron acceptors. D2 is needed for assembly of a stable PSII complex. This chain is Photosystem II D2 protein, found in Ceratophyllum demersum (Rigid hornwort).